A 242-amino-acid chain; its full sequence is Small ribosomal subunit protein uS2 (242 aa).

It belongs to the universal ribosomal protein uS2 family.

In Shewanella oneidensis (strain ATCC 700550 / JCM 31522 / CIP 106686 / LMG 19005 / NCIMB 14063 / MR-1), this protein is Small ribosomal subunit protein uS2.